Consider the following 846-residue polypeptide: Protein kintoun (846 aa).

4 disordered regions span residues 216 to 240, 372 to 405, 574 to 631, and 762 to 846; these read TAEE…GKPE, LRHF…DSKA, QALK…ESAC, and KKNQ…EMDD. Over residues 372–382 the composition is skewed to basic and acidic residues; it reads LRHFSREDSGV. S380 is subject to Phosphoserine. Over residues 391-400 the composition is skewed to acidic residues; the sequence is PVEEDPDGEL. The span at 583 to 603 shows a compositional bias: basic and acidic residues; sequence GTKEEEEKGNQDQEPESDKQH. Basic residues-rich tracts occupy residues 611 to 622 and 762 to 776; these read KAGKKQRKRNKK and KKNQ…RAQQ. Residue S780 is modified to Phosphoserine. Polar residues predominate over residues 795 to 809; the sequence is LKQQENQSRNCNKPN.

This sequence belongs to the PIH1 family. Kintoun subfamily. Interacts with Pp1alpha-96A, Pp1-87B, Pp1-13C and flw.

It localises to the cytoplasm. Required for cytoplasmic pre-assembly of axonemal dyneins, thereby playing a central role in motility in cilia and flagella. Involved in pre-assembly of dynein arm complexes in the cytoplasm before intraflagellar transport loads them for the ciliary compartment. The chain is Protein kintoun from Drosophila yakuba (Fruit fly).